The chain runs to 645 residues: Beta-galactosidase (645 aa).

Residue Arg102 participates in substrate binding. Cys106 contacts Zn(2+). A substrate-binding site is contributed by Asn140. Glu141 acts as the Proton donor in catalysis. 3 residues coordinate Zn(2+): Cys150, Cys152, and Cys155. The active-site Nucleophile is Glu312. Residues Trp320 and 360–363 each bind substrate; that span reads EQMH.

The protein belongs to the glycosyl hydrolase 42 family. In terms of assembly, homotrimer.

It carries out the reaction Hydrolysis of terminal non-reducing beta-D-galactose residues in beta-D-galactosides.. Inhibited by Cu(2+) and Fe(2+), and moderately activated by divalent cations such as Co(2+), Mn(2+) and Zn(2+). Considerably activated by dithiothreitol, beta-mercaptoethanol and cysteine. The chain is Beta-galactosidase from Thermus thermophilus.